The primary structure comprises 419 residues: Tol-Pal system protein TolB (419 aa).

The N-terminal stretch at 1–17 (MRFIGLVLLLLSVKLFG) is a signal peptide.

This sequence belongs to the TolB family. As to quaternary structure, the Tol-Pal system is composed of five core proteins: the inner membrane proteins TolA, TolQ and TolR, the periplasmic protein TolB and the outer membrane protein Pal. They form a network linking the inner and outer membranes and the peptidoglycan layer.

The protein resides in the periplasm. Part of the Tol-Pal system, which plays a role in outer membrane invagination during cell division and is important for maintaining outer membrane integrity. The sequence is that of Tol-Pal system protein TolB from Helicobacter hepaticus (strain ATCC 51449 / 3B1).